Consider the following 112-residue polypeptide: Small ribosomal subunit protein bS6 (112 aa).

Belongs to the bacterial ribosomal protein bS6 family.

Binds together with bS18 to 16S ribosomal RNA. This is Small ribosomal subunit protein bS6 from Chlamydia abortus (strain DSM 27085 / S26/3) (Chlamydophila abortus).